We begin with the raw amino-acid sequence, 332 residues long: MSKIGINGFGRIGRLVLRAAIDKGASVVAVNDPFIDVNYMVYLFKFDSTHGRFKGTVAAEGGFLVVNGQKITVFSERDPANINWASAGAEYVVESTGVFTTIEKASTHLKGGAKKVVISAPSADAPMFVCGVNLDAYKPDMKVVSNASCTTNCLAPLAKVINDNFEIVEGLMTTVHATTATQKTVDGPSGKLWRDGRGAAQNIIPAATGAAKAVGKVIPALNGKLTGMAFRVPTPNVSVVDLTVRLGKGASYDEIKAKVQEAANGPLKGILGYTDEEVVSTDFLSDTHSSVFDAKAGISLNDKFVKLISWYDNEFGYSNRVIDLIKYMQSKD.

Residues 11-12 (RI), D32, and R77 contribute to the NAD(+) site. D-glyceraldehyde 3-phosphate is bound by residues 148 to 150 (SCT), T179, 208 to 209 (TG), and R231. C149 functions as the Nucleophile in the catalytic mechanism. NAD(+) is bound at residue N313.

The protein belongs to the glyceraldehyde-3-phosphate dehydrogenase family. In terms of assembly, homotetramer.

The protein localises to the cytoplasm. It catalyses the reaction D-glyceraldehyde 3-phosphate + phosphate + NAD(+) = (2R)-3-phospho-glyceroyl phosphate + NADH + H(+). It functions in the pathway carbohydrate degradation; glycolysis; pyruvate from D-glyceraldehyde 3-phosphate: step 1/5. This Drosophila pseudoobscura pseudoobscura (Fruit fly) protein is Glyceraldehyde-3-phosphate dehydrogenase 2 (Gapdh2).